The following is a 396-amino-acid chain: Elongation factor Tu (396 aa).

One can recognise a tr-type G domain in the interval 10–206 (KPHVNVGTIG…ALDSYIPTPE (197 aa)). Residues 19–26 (GHVDHGKT) are G1. Position 19 to 26 (19 to 26 (GHVDHGKT)) interacts with GTP. Position 26 (Thr-26) interacts with Mg(2+). The G2 stretch occupies residues 60-64 (GITIN). The G3 stretch occupies residues 81–84 (DCPG). Residues 81-85 (DCPGH) and 136-139 (NKCD) contribute to the GTP site. The segment at 136 to 139 (NKCD) is G4. Residues 174–176 (SAK) are G5.

It belongs to the TRAFAC class translation factor GTPase superfamily. Classic translation factor GTPase family. EF-Tu/EF-1A subfamily. Monomer.

Its subcellular location is the cytoplasm. It catalyses the reaction GTP + H2O = GDP + phosphate + H(+). Functionally, GTP hydrolase that promotes the GTP-dependent binding of aminoacyl-tRNA to the A-site of ribosomes during protein biosynthesis. The sequence is that of Elongation factor Tu from Herminiimonas arsenicoxydans.